We begin with the raw amino-acid sequence, 356 residues long: MKFIDRVKIHVKAGDGGRGCLSFRREKFIPKGGPDGGDGGRGGNIVLRVDEGLGTLLDLRYQIHYKAQRGAHGMGKNCHGKNGEDLEIRVPPGVLVYDAETDELLADLTEGCHELVVVRGGMGGRGNARFATSTNRAPRHVQPGVEGEERWLRLELKLLADVGLLGMPNAGKSTLISAVSAARPKIADYPFTTLVPNLGVVRCGGFKTFVMADIPGLIEGASEGHGLGTRFLRHVERTDLFLHLVDLSDLQEGDPMERFALINRELARHNPELMEKPQLVVLSKIDVSEVRERLDAVRAAFAAEGIRTLAISAVTGEGLKELVAEVARELEKLRASRLQADQKAAEEDEPWQPDLS.

The Obg domain occupies 1 to 159; sequence MKFIDRVKIH…RWLRLELKLL (159 aa). Positions 160 to 331 constitute an OBG-type G domain; the sequence is ADVGLLGMPN…LVAEVARELE (172 aa). GTP is bound by residues 166–173, 191–195, 213–216, 283–286, and 312–314; these read GMPNAGKS, FTTLV, DIPG, SKID, and SAV. Serine 173 and threonine 193 together coordinate Mg(2+).

Belongs to the TRAFAC class OBG-HflX-like GTPase superfamily. OBG GTPase family. As to quaternary structure, monomer. Mg(2+) is required as a cofactor.

The protein resides in the cytoplasm. Functionally, an essential GTPase which binds GTP, GDP and possibly (p)ppGpp with moderate affinity, with high nucleotide exchange rates and a fairly low GTP hydrolysis rate. Plays a role in control of the cell cycle, stress response, ribosome biogenesis and in those bacteria that undergo differentiation, in morphogenesis control. This chain is GTPase Obg, found in Syntrophotalea carbinolica (strain DSM 2380 / NBRC 103641 / GraBd1) (Pelobacter carbinolicus).